The chain runs to 145 residues: UPF0310 protein PH1033 (145 aa).

The protein belongs to the UPF0310 family.

This is UPF0310 protein PH1033 from Pyrococcus horikoshii (strain ATCC 700860 / DSM 12428 / JCM 9974 / NBRC 100139 / OT-3).